The primary structure comprises 279 residues: Undecaprenyl-diphosphatase (279 aa).

8 helical membrane passes run 2-22, 44-64, 85-105, 113-133, 163-183, 188-208, 225-245, and 255-275; these read LFIE…TEWL, AFME…VIVI, WQLW…AVPL, FNHM…FLWI, VLSI…AIIL, TVAA…YSGL, LLVL…VIKL, and FTVF…YSVF.

This sequence belongs to the UppP family.

It is found in the cell membrane. The catalysed reaction is di-trans,octa-cis-undecaprenyl diphosphate + H2O = di-trans,octa-cis-undecaprenyl phosphate + phosphate + H(+). Functionally, catalyzes the dephosphorylation of undecaprenyl diphosphate (UPP). Confers resistance to bacitracin. The protein is Undecaprenyl-diphosphatase of Streptococcus equi subsp. zooepidemicus (strain H70).